A 250-amino-acid chain; its full sequence is MGRGRVELKRIENKINRQVTFAKRRNGLLKKAYELSVLCDAEVSLIVFSNRGKLYEFCSTSNMLKTLERYQKCSYGSIEVNNKPAKELENSYREYLKLKGRYENLQRQQRNLLGEDLGPLNSKELEQLERQLDGSLKQVRCIKTQYMLDQLSDLQGKEHILLDANRALSMKLEDMIGVRHHHIGGGWEGGDQQNIAYGHPQAHSQGLYQSLECDPTLQIGYSHPVCSEQMAVTVQGQSQQGNGYIPGWML.

The MADS-box domain maps to 3 to 57; the sequence is RGRVELKRIENKINRQVTFAKRRNGLLKKAYELSVLCDAEVSLIVFSNRGKLYEF. Positions 85 to 150 form a coiled coil; that stretch reads AKELENSYRE…CIKTQYMLDQ (66 aa). In terms of domain architecture, K-box spans 88–178; the sequence is LENSYREYLK…SMKLEDMIGV (91 aa).

In terms of assembly, heterodimer with AGAMOUS capable of binding to CArG-box sequences. Interacts with TT16/AGL32.

The protein resides in the nucleus. Its function is as follows. Probable transcription factor. Functions with SEPALLATA1/AGL2 and SEPALLATA3/AGL9 to ensure proper development of petals, stamens and carpels and to prevent the indeterminate growth of the flower meristem. Forms a heterodimer via the K-box domain with AG, that could be involved in genes regulation during floral meristem development. The protein is Developmental protein SEPALLATA 2 (SEP2) of Arabidopsis thaliana (Mouse-ear cress).